Here is a 111-residue protein sequence, read N- to C-terminus: Protein BEX5 (111 aa).

Over residues 1–12 the composition is skewed to basic and acidic residues; it reads MENVPKENKVVE. Residues 1–37 form a disordered region; that stretch reads MENVPKENKVVEKAPVQNEAPALGGGEYQEPGGNVKG. The interval 100-104 is his cluster; it reads HHDHH. Cys108 is a binding site for Zn(2+).

It belongs to the BEX family. Ubiquitinated. Degraded by the proteasome.

Its subcellular location is the cytoplasm. This Homo sapiens (Human) protein is Protein BEX5 (BEX5).